A 695-amino-acid chain; its full sequence is Centrosomal protein kizuna (695 aa).

The span at 1-12 shows a compositional bias: gly residues; sequence MPRGRGGGGGGL. Residues 1-24 form a disordered region; that stretch reads MPRGRGGGGGGLRQASATSAPLAS. Positions 15-24 are enriched in low complexity; the sequence is ASATSAPLAS. 2 coiled-coil regions span residues 29–57 and 102–132; these read ERVG…EYNK and VEHL…LSKD. Disordered regions lie at residues 261 to 313, 351 to 391, 444 to 465, and 633 to 695; these read EIGS…SDRE, HSAW…SDLT, QSFP…EKVP, and SEAS…FYDT. 2 stretches are compositionally biased toward polar residues: residues 263-274 and 282-297; these read GSSTQHSKSNLS and LHSS…NSIT. 2 stretches are compositionally biased toward basic and acidic residues: residues 299–313 and 360–377; these read LKCD…SDRE and DLDH…KHEE. The span at 382 to 391 shows a compositional bias: low complexity; that stretch reads GSSCSSSDLT. Residue Thr391 is modified to Phosphothreonine; by PLK1. The span at 448–465 shows a compositional bias: basic and acidic residues; that stretch reads DSKREPSPDSPRQPEKVP. Low complexity predominate over residues 633–645; that stretch reads SEASFSSSEGSPL. Phosphoserine is present on residues Ser667, Ser670, and Ser672. Over residues 676 to 686 the composition is skewed to basic and acidic residues; the sequence is AALRPRDHDMP.

It belongs to the kizuna family. As to quaternary structure, interacts with AKAP9, CEP72, ODF2, PCNT and TUBGCP2. Phosphorylation at Thr-391 by PLK1 is not needed for centrosomal localization or pericentriolar material expansion but is indispensable for spindle-pole stabilization.

It is found in the cytoplasm. It localises to the cytoskeleton. The protein localises to the microtubule organizing center. Its subcellular location is the centrosome. The protein resides in the cilium basal body. Centrosomal protein required for establishing a robust mitotic centrosome architecture that can endure the forces that converge on the centrosomes during spindle formation. Required for stabilizing the expanded pericentriolar material around the centriole. In Mus musculus (Mouse), this protein is Centrosomal protein kizuna (Kiz).